The sequence spans 189 residues: Thioredoxin-like protein CITRX, chloroplastic (189 aa).

The N-terminal 36 residues, 1–36 (MAMAAAASLLPACAAPTLPGRAFRPRRNSTPTASLS), are a transit peptide targeting the chloroplast. Residues 72 to 189 (GSGKYIAPDY…MIRNIIDNEL (118 aa)) form the Thioredoxin domain. Catalysis depends on nucleophile residues Cys-112 and Cys-115. A disulfide bridge links Cys-112 with Cys-115.

The protein belongs to the thioredoxin family. Plant CITRX-type subfamily.

It is found in the plastid. The protein localises to the chloroplast. Probable thiol-disulfide oxidoreductase that may play a role in proper chloroplast development. The sequence is that of Thioredoxin-like protein CITRX, chloroplastic from Oryza sativa subsp. indica (Rice).